The sequence spans 432 residues: Chaperone SurA (432 aa).

The N-terminal stretch at 1-26 (MKKIASFCSAAVLIASSFLLNNTVQA) is a signal peptide. PpiC domains follow at residues 176–277 (QTEY…KVQD) and 286–386 (VQEV…EVTG).

It is found in the periplasm. It catalyses the reaction [protein]-peptidylproline (omega=180) = [protein]-peptidylproline (omega=0). Chaperone involved in the correct folding and assembly of outer membrane proteins. Recognizes specific patterns of aromatic residues and the orientation of their side chains, which are found more frequently in integral outer membrane proteins. May act in both early periplasmic and late outer membrane-associated steps of protein maturation. The protein is Chaperone SurA of Idiomarina loihiensis (strain ATCC BAA-735 / DSM 15497 / L2-TR).